The chain runs to 135 residues: Small ribosomal subunit protein eS24A (135 aa).

S2 carries the post-translational modification N-acetylserine. Position 14 is a phosphoserine (S14). Residue K21 forms a Glycyl lysine isopeptide (Lys-Gly) (interchain with G-Cter in ubiquitin) linkage. S56 bears the Phosphoserine mark. The tract at residues 102-135 (KASRQQRKQKKNRDKKIFGTGKRLAKKVARRNAD) is disordered. Composition is skewed to basic residues over residues 105-115 (RQQRKQKKNRD) and 124-135 (RLAKKVARRNAD).

The protein belongs to the eukaryotic ribosomal protein eS24 family. In terms of assembly, component of the small ribosomal subunit (SSU). Mature yeast ribosomes consist of a small (40S) and a large (60S) subunit. The 40S small subunit contains 1 molecule of ribosomal RNA (18S rRNA) and 33 different proteins (encoded by 57 genes). The large 60S subunit contains 3 rRNA molecules (25S, 5.8S and 5S rRNA) and 46 different proteins (encoded by 81 genes). In terms of processing, N-terminally acetylated by acetyltransferase NatA. Also partially acetylated by NatC.

The protein localises to the cytoplasm. In terms of biological role, component of the ribosome, a large ribonucleoprotein complex responsible for the synthesis of proteins in the cell. The small ribosomal subunit (SSU) binds messenger RNAs (mRNAs) and translates the encoded message by selecting cognate aminoacyl-transfer RNA (tRNA) molecules. The large subunit (LSU) contains the ribosomal catalytic site termed the peptidyl transferase center (PTC), which catalyzes the formation of peptide bonds, thereby polymerizing the amino acids delivered by tRNAs into a polypeptide chain. The nascent polypeptides leave the ribosome through a tunnel in the LSU and interact with protein factors that function in enzymatic processing, targeting, and the membrane insertion of nascent chains at the exit of the ribosomal tunnel. This is Small ribosomal subunit protein eS24A from Saccharomyces cerevisiae (strain ATCC 204508 / S288c) (Baker's yeast).